A 161-amino-acid polypeptide reads, in one-letter code: Protein PLASTID TRANSCRIPTIONALLY ACTIVE 7 (161 aa).

Residues 1-32 constitute a chloroplast transit peptide; that stretch reads MASFTCSSPSSILPIIDTRSGNLRCTFQSQVS.

In terms of assembly, component of the transcriptionally active chromosome (TAC) complexes. Interacts with FLN1, PTAC10, PTAC12/HMR/PAP5 and PTAC14. Binds to SL1/MTERF3. As to expression, mostly expressed in leaves, flowers and seedlings, and, to a lower extent, in roots and stems.

It is found in the plastid. It localises to the chloroplast. In terms of biological role, essential for chloroplast development, especially for thylakoid formation. Involved in plastid gene expression, probably by maintaining plastid-encoded RNA polymerase (PEP) activity. In Arabidopsis thaliana (Mouse-ear cress), this protein is Protein PLASTID TRANSCRIPTIONALLY ACTIVE 7.